A 158-amino-acid chain; its full sequence is Protein Smg homolog (158 aa).

Belongs to the Smg family.

The chain is Protein Smg homolog from Vibrio cholerae serotype O1 (strain ATCC 39315 / El Tor Inaba N16961).